The primary structure comprises 172 residues: Disulfide bond formation protein B (172 aa).

At 1–16 (MNLFASLNQFSKNRIS) the chain is on the cytoplasmic side. Residues 17–33 (WLLLLLFVVFFEGAALF) form a helical membrane-spanning segment. The Periplasmic portion of the chain corresponds to 34–51 (FQHVMMLSPCVMCIYERV). Cysteine 43 and cysteine 46 form a disulfide bridge. A helical transmembrane segment spans residues 52–67 (AMLGVGGAALFGLIAP). The Cytoplasmic segment spans residues 68–74 (NNPLVRW). Residues 75–92 (LGLAAWGASAYKGLALSL) form a helical membrane-spanning segment. Over 93 to 147 (QHVDYQFNPSPFATCDLFVTFPDWAPLNQWAPWMFEAYGDCSKIVWQFMTLSMPQ) the chain is Periplasmic. Cysteine 107 and cysteine 133 are disulfide-bonded. Residues 148-166 (WLVIIFAGNLVALAFIVIA) form a helical membrane-spanning segment. The Cytoplasmic segment spans residues 167-172 (QFFKSK).

The protein belongs to the DsbB family.

Its subcellular location is the cell inner membrane. In terms of biological role, required for disulfide bond formation in some periplasmic proteins. Acts by oxidizing the DsbA protein. The chain is Disulfide bond formation protein B from Vibrio vulnificus (strain CMCP6).